The primary structure comprises 646 residues: Peptidylprolyl isomerase domain and WD repeat-containing protein 1 (646 aa).

The disordered stretch occupies residues 1 to 30 (MAAESGSDFQQRRRRRRDPEEPEKTELSER). A2 bears the N-acetylalanine mark. Residues 17 to 30 (RDPEEPEKTELSER) are compositionally biased toward basic and acidic residues. WD repeat units lie at residues 88–126 (MHRD…IEFV), 131–170 (SHLG…MINM), 221–260 (LHTS…YKFP), and 278–319 (KCKA…RVFD). Residues 455–478 (EPEDTKSADSDRDVFNEKPSKEEV) are compositionally biased toward basic and acidic residues. The interval 455 to 490 (EPEDTKSADSDRDVFNEKPSKEEVMAATQAEGPKRV) is disordered. In terms of domain architecture, PPIase cyclophilin-type spans 490-645 (VSDSAIIHTS…EDVSIINITV (156 aa)).

This sequence belongs to the cyclophilin-type PPIase family. PPIL1 subfamily. As to quaternary structure, identified in the spliceosome C complex.

It is found in the nucleus. The enzyme catalyses [protein]-peptidylproline (omega=180) = [protein]-peptidylproline (omega=0). Inhibited by cyclosporin A (CsA). In terms of biological role, PPIase that catalyzes the cis-trans isomerization of proline imidic peptide bonds in oligopeptides and may therefore assist protein folding. May be involved in pre-mRNA splicing. This chain is Peptidylprolyl isomerase domain and WD repeat-containing protein 1, found in Pongo abelii (Sumatran orangutan).